Here is a 463-residue protein sequence, read N- to C-terminus: Paraneoplastic antigen Ma3 (463 aa).

The segment at 363-410 is disordered; it reads VGAVPLPASGNSFDARPSQGYRRRRGRGQHRRGGVARAGSRGSRKRKR. Basic residues predominate over residues 383–396; sequence YRRRRGRGQHRRGG. The CCHC-type zinc finger occupies 412–429; sequence TFCYSCGEDGHIRVQCIN. A disordered region spans residues 440–463; sequence KQAAVESGNGNWAWDKSHPKSKAK.

It belongs to the PNMA family. In terms of tissue distribution, expressed at high levels in the brain and testis. Expressed at lower levels in the heart, trachea and kidney.

The protein resides in the nucleus. It is found in the nucleolus. The protein is Paraneoplastic antigen Ma3 (PNMA3) of Homo sapiens (Human).